Consider the following 99-residue polypeptide: Probable small ribosomal subunit protein cS23 (99 aa).

Belongs to the chloroplast-specific ribosomal protein cS23 family. In terms of assembly, part of the 30S ribosomal subunit.

Its function is as follows. Probably a ribosomal protein or a ribosome-associated protein. The chain is Probable small ribosomal subunit protein cS23 from Synechococcus sp. (strain JA-2-3B'a(2-13)) (Cyanobacteria bacterium Yellowstone B-Prime).